We begin with the raw amino-acid sequence, 363 residues long: Outer membrane porin C (363 aa).

The first 21 residues, M1 to A21, serve as a signal peptide directing secretion. The segment covering N174–R187 has biased composition (polar residues). The disordered stretch occupies residues N174–D195.

It belongs to the Gram-negative porin family. As to quaternary structure, homotrimer. Probably forms mixed heterotrimers with OmpF; other mixed heterotrimers are also probable.

Its subcellular location is the cell outer membrane. Forms pores that allow passive diffusion of small molecules across the outer membrane. In terms of biological role, (Microbial infection) Binds CdiA-EC536, probably acts as the outer membrane receptor for toxin CdiA-EC536 with OmpF. The chain is Outer membrane porin C (ompC) from Enterobacter cloacae subsp. cloacae (strain ATCC 13047 / DSM 30054 / NBRC 13535 / NCTC 10005 / WDCM 00083 / NCDC 279-56).